The sequence spans 386 residues: 5-hydroxytryptamine receptor 1B (386 aa).

At 1 to 42 (MEEQGIQCAPPPPAASQTGVPLTNLSHNCSADGYIYQDSIAL) the chain is on the extracellular side. N-linked (GlcNAc...) asparagine glycosylation is found at Asn-24 and Asn-28. The chain crosses the membrane as a helical span at residues 43-68 (PWKVLLVALLALITLATTLSNAFVIA). Residues 69–82 (TVYRTRKLHTPANY) lie on the Cytoplasmic side of the membrane. The helical transmembrane segment at 83 to 107 (LIASLAVTDLLVSILVMPISTMYTV) threads the bilayer. The Extracellular segment spans residues 108–115 (TGRWTLGQ). A helical membrane pass occupies residues 116-141 (VVCDFWLSSDITCCTASIMHLCVIAL). An intrachain disulfide couples Cys-118 to Cys-195. The ergotamine site is built by Asp-125 and Thr-130. The DRY motif; important for ligand-induced conformation changes and signaling signature appears at 142 to 144 (DRY). Residues 142 to 161 (DRYWAITDAVEYSAKRTPKR) lie on the Cytoplasmic side of the membrane. The chain crosses the membrane as a helical span at residues 162-180 (AAIMIVLVWVFSISISLPP). Topologically, residues 181–201 (FFWRQAKAEEEMLDCFVNTDH) are extracellular. Residue Val-197 coordinates ergotamine. A helical transmembrane segment spans residues 202 to 225 (VLYTVYSTVGAFYLPTLLLIALYG). Topologically, residues 226 to 311 (RIYVEARSRI…AARERKATKT (86 aa)) are cytoplasmic. A compositionally biased stretch (polar residues) spans 255–268 (DSPGSTSSVTSINS). The interval 255–278 (DSPGSTSSVTSINSRAPDVPSESG) is disordered. A helical transmembrane segment spans residues 312-333 (LGIILGAFIVCWLPFFIISLVM). Residues 334–343 (PICKDACWFH) lie on the Extracellular side of the membrane. The helical transmembrane segment at 344 to 366 (MAIFDFFNWLGYLNSLINPIIYT) threads the bilayer. An NPxxY motif; important for ligand-induced conformation changes and signaling motif is present at residues 361–365 (NPIIY). The Cytoplasmic portion of the chain corresponds to 367–386 (MSNEDFKQAFHKLIRFKCAG). Residue Cys-384 is the site of S-palmitoyl cysteine attachment.

Belongs to the G-protein coupled receptor 1 family. Homodimer. Heterodimer with HTR1D. Phosphorylated. Desensitization of the receptor may be mediated by its phosphorylation. Post-translationally, palmitoylated. In terms of tissue distribution, predominantly expressed in striatum and Purkinje cells.

The protein localises to the cell membrane. Its function is as follows. G-protein coupled receptor for 5-hydroxytryptamine (serotonin). Also functions as a receptor for ergot alkaloid derivatives, various anxiolytic and antidepressant drugs and other psychoactive substances, such as lysergic acid diethylamide (LSD). Ligand binding causes a conformation change that triggers signaling via guanine nucleotide-binding proteins (G proteins) and modulates the activity of downstream effectors, such as adenylate cyclase. HTR1B is coupled to G(i)/G(o) G alpha proteins and mediates inhibitory neurotransmission by inhibiting adenylate cyclase activity. Arrestin family members inhibit signaling via G proteins and mediate activation of alternative signaling pathways. Regulates the release of 5-hydroxytryptamine, dopamine and acetylcholine in the brain, and thereby affects neural activity, nociceptive processing, pain perception, mood and behavior. Besides, plays a role in vasoconstriction of cerebral arteries. In Mus musculus (Mouse), this protein is 5-hydroxytryptamine receptor 1B (Htr1b).